Reading from the N-terminus, the 503-residue chain is MSYFPWLTIIVVFPISAGSSIFFLPHRGNKVVRWYTICICLLELLLTTYAFCYHFQLDDPLIQLEEDYKWINILDFHWRLGIDGLSIGPTLLTGFITTLATLAAWPVTRDSQLFHFLMLAMYSGQIGSFSSRDLLLFFIMWELELIPVYLLLSMWGGKKRLYSATKFILYTAGGSIFLLMGVPGMGLYGSNEPTLNLETSANRSYPAALEIIFYFGFFIAYAVKSPIIPLHTWLPDTHGEAHYSTCMLLAGILLKMGAYGLVRINMELLPHAHSIFSPWLMIVGTIQIIYAASTSPGQPNFKKRIAYSSVSHMGFTIIGIASITDMGLNGAILQIISHGFIGAALFFLAGTSYDRIGLVYLDEMGGIAIPMPKIFTMFSSFSMASLALPGMSGFFAELVVFFGIITSTKYLLMPKILITFVMAIGMILTPIYSLSMLRQMFYGYKLFNVTNSYFVDSGPRELFVSICIFLPVIGIGIYPDFVLSLSVEKIEAILSNYLHKSFS.

Transmembrane regions (helical) follow at residues 4 to 24, 37 to 57, 87 to 107, 134 to 154, 167 to 187, 208 to 228, 242 to 262, 272 to 292, 305 to 325, 330 to 350, 386 to 406, 416 to 436, and 462 to 482; these read FPWLTIIVVFPISAGSSIFFL, ICICLLELLLTTYAFCYHFQL, IGPTLLTGFITTLATLAAWPV, LLLFFIMWELELIPVYLLLSM, FILYTAGGSIFLLMGVPGMGL, ALEIIFYFGFFIAYAVKSPII, HYSTCMLLAGILLKMGAYGLV, AHSIFSPWLMIVGTIQIIYAA, IAYSSVSHMGFTIIGIASITD, GAILQIISHGFIGAALFFLAG, LALPGMSGFFAELVVFFGIIT, ILITFVMAIGMILTPIYSLSM, and LFVSICIFLPVIGIGIYPDFV.

It belongs to the complex I subunit 4 family.

The protein resides in the plastid. The protein localises to the chloroplast thylakoid membrane. The enzyme catalyses a plastoquinone + NADH + (n+1) H(+)(in) = a plastoquinol + NAD(+) + n H(+)(out). It catalyses the reaction a plastoquinone + NADPH + (n+1) H(+)(in) = a plastoquinol + NADP(+) + n H(+)(out). The chain is NAD(P)H-quinone oxidoreductase chain 4, chloroplastic from Drimys granadensis.